We begin with the raw amino-acid sequence, 427 residues long: 3-phosphoshikimate 1-carboxyvinyltransferase (427 aa).

The 3-phosphoshikimate site is built by Lys22, Ser23, and Arg27. Lys22 serves as a coordination point for phosphoenolpyruvate. Phosphoenolpyruvate is bound by residues Gly96 and Arg124. Residues Ser169, Ser170, Gln171, Ser197, Asp313, Asn336, and Lys340 each contribute to the 3-phosphoshikimate site. Residue Gln171 participates in phosphoenolpyruvate binding. Asp313 (proton acceptor) is an active-site residue. Phosphoenolpyruvate-binding residues include Arg344, Arg386, and Lys411.

Belongs to the EPSP synthase family. In terms of assembly, monomer.

Its subcellular location is the cytoplasm. It catalyses the reaction 3-phosphoshikimate + phosphoenolpyruvate = 5-O-(1-carboxyvinyl)-3-phosphoshikimate + phosphate. The protein operates within metabolic intermediate biosynthesis; chorismate biosynthesis; chorismate from D-erythrose 4-phosphate and phosphoenolpyruvate: step 6/7. Functionally, catalyzes the transfer of the enolpyruvyl moiety of phosphoenolpyruvate (PEP) to the 5-hydroxyl of shikimate-3-phosphate (S3P) to produce enolpyruvyl shikimate-3-phosphate and inorganic phosphate. The chain is 3-phosphoshikimate 1-carboxyvinyltransferase from Escherichia coli O8 (strain IAI1).